The sequence spans 461 residues: UPF0210 protein Ddes_0622 (461 aa).

This sequence belongs to the UPF0210 family. Homodimer.

This is UPF0210 protein Ddes_0622 from Desulfovibrio desulfuricans (strain ATCC 27774 / DSM 6949 / MB).